The following is a 211-amino-acid chain: Large ribosomal subunit protein uL3 (211 aa).

It belongs to the universal ribosomal protein uL3 family. In terms of assembly, part of the 50S ribosomal subunit. Forms a cluster with proteins L14 and L19.

Its function is as follows. One of the primary rRNA binding proteins, it binds directly near the 3'-end of the 23S rRNA, where it nucleates assembly of the 50S subunit. This is Large ribosomal subunit protein uL3 from Geobacter sp. (strain M21).